The following is a 2157-amino-acid chain: Unconventional myosin-IXb (2157 aa).

Ser2 carries the post-translational modification N-acetylserine. Residues 15–114 form the Ras-associating domain; it reads AAYHLHIYPQ…YYFLLQERNA (100 aa). The region spanning 146 to 953 is the Myosin motor domain; sequence ADFDDLCNLP…ERQALQETLH (808 aa). 239 to 246 contributes to the ATP binding site; it reads GESGSGKT. The interval 709–734 is disordered; that stretch reads AEKAAGMSSPGAQSHPEELPRGASTP. Residues Ser716 and Ser717 each carry the phosphoserine modification. The actin-binding stretch occupies residues 844 to 855; the sequence is KAEPFFIRCIRS. Residues 940-1044 are neck or regulatory domain; the sequence is LKETERQALQ…CRGHLQRKSF (105 aa). 4 IQ domains span residues 957-977, 979-1000, 1001-1023, and 1024-1053; these read VRKI…RHFL, MKRA…RALE, RTQA…LYRH, and QKQS…EKQK. Ser1045 carries the phosphoserine modification. Residues 1045 to 2157 are tail; sequence SQMISEKQKA…LPPASGQTNG (1113 aa). Residues 1046–1071 are a coiled coil; sequence QMISEKQKAEEKEREALEAARAGAEE. Disordered regions lie at residues 1046–1298, 1320–1410, and 1455–1484; these read QMIS…TQIQ, AAAS…GSQV, and GLEA…KKNR. 5 stretches are compositionally biased toward basic and acidic residues: residues 1050–1063, 1109–1122, 1136–1160, 1168–1183, and 1191–1201; these read EKQK…EALE, SPLE…EAPS, ESHE…EHVK, SCKE…RRVT, and LEDKKESREDE. A phosphoserine mark is found at Ser1114, Ser1115, and Ser1122. Positions 1211 to 1222 are enriched in polar residues; sequence ENTSQKQPTEQP. Residues Ser1242, Ser1253, Ser1261, and Ser1267 each carry the phosphoserine modification. Position 1271 is a phosphothreonine (Thr1271). A phosphoserine mark is found at Ser1290, Ser1323, and Ser1331. Thr1346 is modified (phosphothreonine). 3 positions are modified to phosphoserine: Ser1354, Ser1356, and Ser1405. The segment covering 1467-1478 has biased composition (basic and acidic residues); sequence AAGEKRTKEPGG. The segment at 1632 to 1681 adopts a Phorbol-ester/DAG-type zinc-finger fold; the sequence is GHVFASYQVSIPQSCEQCLSYIWLMDKALLCSVCKMTCHKKCVHKIQSHC. Residues 1703–1888 enclose the Rho-GAP domain; it reads DSLTSDKASV…MLIKEQMRKY (186 aa). The interaction with RHOA stretch occupies residues 1739 to 1744; the sequence is AANRTR. Residues 1880–1901 are a coiled coil; that stretch reads LIKEQMRKYKVKMEEISQLEAA. Ser1926, Ser1972, Ser1992, and Ser1999 each carry phosphoserine. Residues 1959–1989 are a coiled coil; sequence EDREKEILIERIQSIKEEKEDITYRLPELDP. The segment covering 1980–1993 has biased composition (basic and acidic residues); sequence ITYRLPELDPRGSD. A disordered region spans residues 1980 to 2157; that stretch reads ITYRLPELDP…LPPASGQTNG (178 aa). Residue Thr2005 is modified to Phosphothreonine. Over residues 2021 to 2037 the composition is skewed to pro residues; it reads PPAPALPCPGAPTPSPL. A Phosphoserine modification is found at Ser2050. Residues 2081–2093 show a composition bias toward low complexity; that stretch reads PRWAPGAREAAAP. Residues 2095–2106 show a composition bias toward basic and acidic residues; that stretch reads RRREPPARRPDQ. Ser2141 is modified (phosphoserine).

This sequence belongs to the TRAFAC class myosin-kinesin ATPase superfamily. Myosin family. Interacts (via IQ domains) with CALM. Interacts with RHOA. Interacts (via Rho-GAP domain) with ROBO1; this inhibits the interaction with RHOA and the stimulation of RHOA GTPase activity, and thereby increases the levels of active RHOA. As to expression, detected in peripheral blood leukocytes (at protein level). Expressed predominantly in peripheral blood leukocytes and at lower levels, in thymus, spleen, testis, prostate, ovary, brain, small intestine and lung.

It is found in the cytoplasm. The protein localises to the cell cortex. The protein resides in the perinuclear region. It localises to the cytoskeleton. Its function is as follows. Myosins are actin-based motor molecules with ATPase activity. Unconventional myosins serve in intracellular movements. Binds actin with high affinity both in the absence and presence of ATP and its mechanochemical activity is inhibited by calcium ions. Also acts as a GTPase activator for RHOA. Plays a role in the regulation of cell migration via its role as RHOA GTPase activator. This is regulated by its interaction with the SLIT2 receptor ROBO1; interaction with ROBO1 impairs interaction with RHOA and subsequent activation of RHOA GTPase activity, and thereby leads to increased levels of active, GTP-bound RHOA. This chain is Unconventional myosin-IXb (MYO9B), found in Homo sapiens (Human).